We begin with the raw amino-acid sequence, 276 residues long: Undecaprenyl-diphosphatase (276 aa).

The next 7 helical transmembrane spans lie at 48 to 68 (AANS…AIVF), 92 to 112 (LSIA…FLFE), 119 to 139 (LFSV…MLFA), 155 to 175 (ISYK…WPGF), 196 to 216 (ADFT…LSLV), 225 to 245 (DLMP…LFVV), and 255 to 275 (IKLV…LLIM).

The protein belongs to the UppP family.

Its subcellular location is the cell membrane. It carries out the reaction di-trans,octa-cis-undecaprenyl diphosphate + H2O = di-trans,octa-cis-undecaprenyl phosphate + phosphate + H(+). In terms of biological role, catalyzes the dephosphorylation of undecaprenyl diphosphate (UPP). Confers resistance to bacitracin. The sequence is that of Undecaprenyl-diphosphatase from Bacillus subtilis (strain 168).